Here is a 426-residue protein sequence, read N- to C-terminus: Enolase 2 (426 aa).

Position 163 (Q163) interacts with (2R)-2-phosphoglycerate. E205 serves as the catalytic Proton donor. Mg(2+) is bound by residues D242, E285, and D312. K337, R366, S367, and K388 together coordinate (2R)-2-phosphoglycerate. K337 functions as the Proton acceptor in the catalytic mechanism.

The protein belongs to the enolase family. The cofactor is Mg(2+).

The protein resides in the cytoplasm. Its subcellular location is the secreted. It is found in the cell surface. It carries out the reaction (2R)-2-phosphoglycerate = phosphoenolpyruvate + H2O. Its pathway is carbohydrate degradation; glycolysis; pyruvate from D-glyceraldehyde 3-phosphate: step 4/5. Functionally, catalyzes the reversible conversion of 2-phosphoglycerate (2-PG) into phosphoenolpyruvate (PEP). It is essential for the degradation of carbohydrates via glycolysis. This chain is Enolase 2, found in Methanospirillum hungatei JF-1 (strain ATCC 27890 / DSM 864 / NBRC 100397 / JF-1).